The chain runs to 132 residues: Ragulator complex protein LAMTOR3 homolog (132 aa).

It belongs to the LAMTOR3 family. In terms of assembly, part of the Ragulator complex.

In terms of biological role, regulator of the TOR pathway, a signaling cascade that promotes cell growth in response to growth factors, energy levels, and amino acids. May activate the TOR signaling cascade in response to amino acids. This Dictyostelium discoideum (Social amoeba) protein is Ragulator complex protein LAMTOR3 homolog.